Here is a 175-residue protein sequence, read N- to C-terminus: Macro domain-containing protein TTE0995 (175 aa).

The Macro domain maps to 1–174 (MKEKIKLIKG…VYSKAYEELD (174 aa)).

Belongs to the MacroD-type family.

This Caldanaerobacter subterraneus subsp. tengcongensis (strain DSM 15242 / JCM 11007 / NBRC 100824 / MB4) (Thermoanaerobacter tengcongensis) protein is Macro domain-containing protein TTE0995.